Here is a 486-residue protein sequence, read N- to C-terminus: Bifunctional protein HldE (486 aa).

Residues 1–331 form a ribokinase region; sequence MAEHDDGDLI…VDAVKPASGA (331 aa). 208-211 serves as a coordination point for ATP; the sequence is NRRE. Aspartate 277 is a catalytic residue. The interval 357 to 486 is cytidylyltransferase; sequence FTNGCFDLLH…TTATVTRLRS (130 aa).

In the N-terminal section; belongs to the carbohydrate kinase PfkB family. This sequence in the C-terminal section; belongs to the cytidylyltransferase family. As to quaternary structure, homodimer.

It catalyses the reaction D-glycero-beta-D-manno-heptose 7-phosphate + ATP = D-glycero-beta-D-manno-heptose 1,7-bisphosphate + ADP + H(+). It carries out the reaction D-glycero-beta-D-manno-heptose 1-phosphate + ATP + H(+) = ADP-D-glycero-beta-D-manno-heptose + diphosphate. It functions in the pathway nucleotide-sugar biosynthesis; ADP-L-glycero-beta-D-manno-heptose biosynthesis; ADP-L-glycero-beta-D-manno-heptose from D-glycero-beta-D-manno-heptose 7-phosphate: step 1/4. Its pathway is nucleotide-sugar biosynthesis; ADP-L-glycero-beta-D-manno-heptose biosynthesis; ADP-L-glycero-beta-D-manno-heptose from D-glycero-beta-D-manno-heptose 7-phosphate: step 3/4. Catalyzes the phosphorylation of D-glycero-D-manno-heptose 7-phosphate at the C-1 position to selectively form D-glycero-beta-D-manno-heptose-1,7-bisphosphate. In terms of biological role, catalyzes the ADP transfer from ATP to D-glycero-beta-D-manno-heptose 1-phosphate, yielding ADP-D-glycero-beta-D-manno-heptose. The chain is Bifunctional protein HldE from Acidiphilium cryptum (strain JF-5).